The sequence spans 252 residues: Trans-aconitate 2-methyltransferase (252 aa).

This sequence belongs to the methyltransferase superfamily. Tam family.

It localises to the cytoplasm. The enzyme catalyses trans-aconitate + S-adenosyl-L-methionine = (E)-3-(methoxycarbonyl)pent-2-enedioate + S-adenosyl-L-homocysteine. Catalyzes the S-adenosylmethionine monomethyl esterification of trans-aconitate. The sequence is that of Trans-aconitate 2-methyltransferase from Escherichia coli (strain SE11).